The chain runs to 48 residues: Small, acid-soluble spore protein P (48 aa).

A compositionally biased stretch (basic and acidic residues) spans 1–12 (MTNKNDGKDMRK). Positions 1–48 (MTNKNDGKDMRKNAPKGDNPGQPEPLDGSKKVKNRNHTRQKHNTSHDM) are disordered. Residues 31-48 (KVKNRNHTRQKHNTSHDM) are compositionally biased toward basic residues.

This sequence belongs to the SspP family.

The protein resides in the spore core. The polypeptide is Small, acid-soluble spore protein P (Geobacillus kaustophilus (strain HTA426)).